The chain runs to 379 residues: Dual-specificity RNA methyltransferase RlmN (379 aa).

Glutamate 96 (proton acceptor) is an active-site residue. One can recognise a Radical SAM core domain in the interval 102–342; the sequence is TDDRGTLCVS…TRTTRGDDID (241 aa). Cysteine 109 and cysteine 345 are joined by a disulfide. [4Fe-4S] cluster contacts are provided by cysteine 116, cysteine 120, and cysteine 123. S-adenosyl-L-methionine-binding positions include 170 to 171, serine 202, 224 to 226, and asparagine 302; these read GE and SLH. Cysteine 345 (S-methylcysteine intermediate) is an active-site residue.

The protein belongs to the radical SAM superfamily. RlmN family. The cofactor is [4Fe-4S] cluster.

It localises to the cytoplasm. It carries out the reaction adenosine(2503) in 23S rRNA + 2 reduced [2Fe-2S]-[ferredoxin] + 2 S-adenosyl-L-methionine = 2-methyladenosine(2503) in 23S rRNA + 5'-deoxyadenosine + L-methionine + 2 oxidized [2Fe-2S]-[ferredoxin] + S-adenosyl-L-homocysteine. The catalysed reaction is adenosine(37) in tRNA + 2 reduced [2Fe-2S]-[ferredoxin] + 2 S-adenosyl-L-methionine = 2-methyladenosine(37) in tRNA + 5'-deoxyadenosine + L-methionine + 2 oxidized [2Fe-2S]-[ferredoxin] + S-adenosyl-L-homocysteine. In terms of biological role, specifically methylates position 2 of adenine 2503 in 23S rRNA and position 2 of adenine 37 in tRNAs. m2A2503 modification seems to play a crucial role in the proofreading step occurring at the peptidyl transferase center and thus would serve to optimize ribosomal fidelity. The polypeptide is Dual-specificity RNA methyltransferase RlmN (Pseudomonas entomophila (strain L48)).